Consider the following 375-residue polypeptide: Carbamoyl phosphate synthase small chain (375 aa).

A CPSase region spans residues 1–180; it reads MSKALLVLED…DAYVVEPKGK (180 aa). L-glutamine is bound by residues Ser46, Gly232, and Gly234. The 192-residue stretch at 184–375 folds into the Glutamine amidotransferase type-1 domain; the sequence is TVAALDLGIK…SFVELMAAQR (192 aa). The Nucleophile role is filled by Cys260. Residues Phe261, Gln264, Asn302, Gly304, and Phe305 each contribute to the L-glutamine site. Residues His350 and Glu352 contribute to the active site.

It belongs to the CarA family. As to quaternary structure, composed of two chains; the small (or glutamine) chain promotes the hydrolysis of glutamine to ammonia, which is used by the large (or ammonia) chain to synthesize carbamoyl phosphate. Tetramer of heterodimers (alpha,beta)4.

It carries out the reaction hydrogencarbonate + L-glutamine + 2 ATP + H2O = carbamoyl phosphate + L-glutamate + 2 ADP + phosphate + 2 H(+). It catalyses the reaction L-glutamine + H2O = L-glutamate + NH4(+). Its pathway is amino-acid biosynthesis; L-arginine biosynthesis; carbamoyl phosphate from bicarbonate: step 1/1. It participates in pyrimidine metabolism; UMP biosynthesis via de novo pathway; (S)-dihydroorotate from bicarbonate: step 1/3. In terms of biological role, small subunit of the glutamine-dependent carbamoyl phosphate synthetase (CPSase). CPSase catalyzes the formation of carbamoyl phosphate from the ammonia moiety of glutamine, carbonate, and phosphate donated by ATP, constituting the first step of 2 biosynthetic pathways, one leading to arginine and/or urea and the other to pyrimidine nucleotides. The small subunit (glutamine amidotransferase) binds and cleaves glutamine to supply the large subunit with the substrate ammonia. In Mycobacterium leprae (strain TN), this protein is Carbamoyl phosphate synthase small chain.